The primary structure comprises 66 residues: Large ribosomal subunit protein bL31 (66 aa).

The Zn(2+) site is built by cysteine 16, cysteine 18, cysteine 36, and cysteine 39.

Belongs to the bacterial ribosomal protein bL31 family. Type A subfamily. Part of the 50S ribosomal subunit. It depends on Zn(2+) as a cofactor.

Its function is as follows. Binds the 23S rRNA. This chain is Large ribosomal subunit protein bL31, found in Trichlorobacter lovleyi (strain ATCC BAA-1151 / DSM 17278 / SZ) (Geobacter lovleyi).